A 545-amino-acid chain; its full sequence is SLAIN motif-containing protein 1 (545 aa).

Residues 14 to 53 (TTNGLVANAELEVKKLQELVRKLEKQNEQLRNRASAVSNC) adopt a coiled-coil conformation. Composition is skewed to low complexity over residues 268–286 (TTST…SLYS) and 466–481 (IPSS…SGIP). Disordered stretches follow at residues 268–342 (TTST…IRDC) and 461–526 (QGGS…LQPP). The span at 503-522 (STANGSSIPRSKIAQPQRSF) shows a compositional bias: polar residues.

It belongs to the SLAIN motif-containing family.

Its subcellular location is the cytoplasm. The protein resides in the cytoskeleton. Functionally, microtubule plus-end tracking protein that might be involved in the regulation of cytoplasmic microtubule dynamics, microtubule organization and microtubule elongation. This is SLAIN motif-containing protein 1 (slain1) from Xenopus tropicalis (Western clawed frog).